Reading from the N-terminus, the 213-residue chain is Probable GTP-binding protein EngB (213 aa).

An EngB-type G domain is found at S30 to I204. GTP-binding positions include G38 to S45, G65 to L69, D83 to G86, T150 to D153, and I183 to A185. The Mg(2+) site is built by S45 and T67.

Belongs to the TRAFAC class TrmE-Era-EngA-EngB-Septin-like GTPase superfamily. EngB GTPase family. Mg(2+) serves as cofactor.

Necessary for normal cell division and for the maintenance of normal septation. In Leptospira biflexa serovar Patoc (strain Patoc 1 / Ames), this protein is Probable GTP-binding protein EngB.